The primary structure comprises 293 residues: Glycine--tRNA ligase alpha subunit (293 aa).

The protein belongs to the class-II aminoacyl-tRNA synthetase family. Tetramer of two alpha and two beta subunits.

It is found in the cytoplasm. The catalysed reaction is tRNA(Gly) + glycine + ATP = glycyl-tRNA(Gly) + AMP + diphosphate. The polypeptide is Glycine--tRNA ligase alpha subunit (Aliarcobacter butzleri (strain RM4018) (Arcobacter butzleri)).